Reading from the N-terminus, the 537-residue chain is Efflux pump ustT (537 aa).

The span at 1–25 (MAKEAQSLHELDNMKEKEVDQEKKA) shows a compositional bias: basic and acidic residues. The disordered stretch occupies residues 1-50 (MAKEAQSLHELDNMKEKEVDQEKKAPTSVGDQEEHDDPKKQASHSQNVSE). N-linked (GlcNAc...) asparagine glycosylation is present at N47. A run of 8 helical transmembrane segments spans residues 71-91 (PLAM…VSLL), 104-124 (WVYM…AGAM), 137-157 (GIGL…NAPL), 162-182 (MFLG…PLIG), 193-213 (WCFI…FFFV), 236-256 (LGSA…QWAG), 266-286 (IILL…SQML), and 304-324 (FGSF…TYWI). N-linked (GlcNAc...) asparagine glycosylation is present at N333. Transmembrane regions (helical) follow at residues 339-359 (AGIR…MGGG), 363-383 (LIGY…VGAG), 397-417 (WIGY…QASL), and 430-450 (TAIS…VCIG). N501 carries an N-linked (GlcNAc...) asparagine glycan. Residues 507–527 (TFYVALAAGITSMLSAFLVQW) traverse the membrane as a helical segment.

This sequence belongs to the major facilitator superfamily. TCR/Tet family.

The protein resides in the cell membrane. Efflux pump; part of the gene cluster that mediates the biosynthesis of ustilaginoidins, dimeric gamma-naphthopyrones isolated from different fungal species. In Ustilaginoidea virens (Rice false smut fungus), this protein is Efflux pump ustT.